Reading from the N-terminus, the 92-residue chain is Small ribosomal subunit protein uS19c (92 aa).

The protein belongs to the universal ribosomal protein uS19 family.

It localises to the plastid. Its subcellular location is the chloroplast. Its function is as follows. Protein S19 forms a complex with S13 that binds strongly to the 16S ribosomal RNA. In Porphyra purpurea (Red seaweed), this protein is Small ribosomal subunit protein uS19c (rps19).